We begin with the raw amino-acid sequence, 248 residues long: tRNA (guanine-N(1)-)-methyltransferase (248 aa).

Residues G113 and 133–138 (IGDYVL) contribute to the S-adenosyl-L-methionine site. Residues 226–248 (ARPAQTIRAKGESQKTPKNKTDG) form a disordered region. Residues 234–248 (AKGESQKTPKNKTDG) are compositionally biased toward basic and acidic residues.

Belongs to the RNA methyltransferase TrmD family. As to quaternary structure, homodimer.

It localises to the cytoplasm. It catalyses the reaction guanosine(37) in tRNA + S-adenosyl-L-methionine = N(1)-methylguanosine(37) in tRNA + S-adenosyl-L-homocysteine + H(+). Specifically methylates guanosine-37 in various tRNAs. This Rhodopseudomonas palustris (strain ATCC BAA-98 / CGA009) protein is tRNA (guanine-N(1)-)-methyltransferase.